Reading from the N-terminus, the 317-residue chain is Putative peptide import ATP-binding protein BruAb2_0797 (317 aa).

The ABC transporter domain maps to 7–250 (LSVRGLAKHY…PQHPYTRALL (244 aa)). Position 43–50 (43–50 (GESGSGKT)) interacts with ATP.

The protein belongs to the ABC transporter superfamily. As to quaternary structure, the complex is composed of two ATP-binding proteins (BruAb2_0796 and BruAb2_0797), two transmembrane proteins (BruAb2_0794) and a solute-binding protein (BruAb2_0792).

The protein resides in the cell inner membrane. In terms of biological role, probably part of an ABC transporter complex that could be involved in peptide import. Probably responsible for energy coupling to the transport system. This chain is Putative peptide import ATP-binding protein BruAb2_0797, found in Brucella abortus biovar 1 (strain 9-941).